Here is a 277-residue protein sequence, read N- to C-terminus: MTLQIDRYAVFGNPIGHSKSPFIHTLFARQTNQSLVYTAETAPVDGFVEAAKAFFADDGKGCNVTVPFKEDAYRFANRLTERAELAGAVNTLKKLDDGEIIGDNTDGEGLVQDLLQHQVVLEGARILVIGAGGAARGVIKPLLDQKPSSLTITNRTFSKAQQLADLFVSHGPIVAKEMTTIEEAYDVIINSTSASLNGELPAVSSAIFSTNSTSYDMMYGKGLTSFNQWAKEHGAAHAYDGLGMLVGQAAESFMLWRGLRPGAKQILRELRKNLEGQ.

Shikimate-binding positions include 18-20 (SKS) and Thr-65. Residue Lys-69 is the Proton acceptor of the active site. NADP(+) is bound at residue Glu-81. 2 residues coordinate shikimate: Asn-90 and Asp-106. NADP(+) is bound by residues 130–134 (GAGGA), 154–159 (NRTFSK), and Met-217. Residue Tyr-219 participates in shikimate binding. Gly-241 lines the NADP(+) pocket.

Belongs to the shikimate dehydrogenase family. In terms of assembly, homodimer.

The catalysed reaction is shikimate + NADP(+) = 3-dehydroshikimate + NADPH + H(+). It functions in the pathway metabolic intermediate biosynthesis; chorismate biosynthesis; chorismate from D-erythrose 4-phosphate and phosphoenolpyruvate: step 4/7. In terms of biological role, involved in the biosynthesis of the chorismate, which leads to the biosynthesis of aromatic amino acids. Catalyzes the reversible NADPH linked reduction of 3-dehydroshikimate (DHSA) to yield shikimate (SA). The polypeptide is Shikimate dehydrogenase (NADP(+)) (Vibrio campbellii (strain ATCC BAA-1116)).